A 325-amino-acid chain; its full sequence is Aldo-keto reductase family 1 member D1 (325 aa).

NADP(+) contacts are provided by residues 22–26 (GLGTY) and aspartate 52. Tyrosine 26 contributes to the substrate binding site. Substrate is bound by residues tyrosine 57, tryptophan 88, glutamate 119, and tyrosine 131. Catalysis depends on tyrosine 57, which acts as the Proton donor. Residues 168-169 (SN), glutamine 192, and 218-223 (HSPLGT) contribute to the NADP(+) site. Serine 228 carries the phosphoserine modification. Substrate is bound at residue tryptophan 229. 272–282 (KSFTPERIKEN) is an NADP(+) binding site.

Belongs to the aldo/keto reductase family.

It localises to the cytoplasm. The catalysed reaction is 5beta-cholestan-3-one + NADP(+) = cholest-4-en-3-one + NADPH + H(+). It catalyses the reaction 4,5beta-dihydrocortisone + NADP(+) = cortisone + NADPH + H(+). It carries out the reaction cortisol + NADPH + H(+) = 5beta-dihydrocortisol + NADP(+). The enzyme catalyses corticosterone + NADPH + H(+) = 5beta-dihydrocorticosterone + NADP(+). The catalysed reaction is 7alpha,12alpha-dihydroxycholest-4-en-3-one + NADPH + H(+) = 7alpha,12alpha-dihydroxy-5beta-cholestan-3-one + NADP(+). It catalyses the reaction 7alpha-hydroxycholest-4-en-3-one + NADPH + H(+) = 7alpha-hydroxy-5beta-cholestan-3-one + NADP(+). It carries out the reaction epitestosterone + NADPH + H(+) = 5beta-dihydroepitestosterone + NADP(+). The enzyme catalyses androst-4-ene-3,17-dione + NADPH + H(+) = 5beta-androstane-3,17-dione + NADP(+). The catalysed reaction is progesterone + NADPH + H(+) = 5beta-pregnan-3,20-dione + NADP(+). It catalyses the reaction 21-hydroxyprogesterone + NADPH + H(+) = 5beta-dihydrodeoxycorticosterone + NADP(+). It carries out the reaction aldosterone + NADPH + H(+) = 5beta-dihydroaldosterone + NADP(+). The enzyme catalyses 17beta-hydroxyandrosta-1,4-dien-3-one + NADPH + H(+) = 17beta-hydroxy-5beta-androst-1-en-3-one + NADP(+). The catalysed reaction is 17beta-hydroxyestr-4-en-3-one + NADPH + H(+) = 17beta-hydroxy-5beta-estran-3-one + NADP(+). It catalyses the reaction 5beta-dihydrotestosterone + NADP(+) = testosterone + NADPH + H(+). It carries out the reaction androst-4-ene-3,11,17-trione + NADPH + H(+) = 17beta-hydroxyandrost-4-ene-3,11-dione + NADP(+). With respect to regulation, subject to inhibition by high substrate concentrations. Inhibited by testosterone concentrations above 10 uM. Inhibited by the primary and secondary bile acids chenodeoxycholic acid and ursodeoxycholic acid. Catalyzes the stereospecific NADPH-dependent reduction of the C4-C5 double bond of bile acid intermediates and steroid hormones carrying a delta(4)-3-one structure to yield an A/B cis-ring junction. This cis-configuration is crucial for bile acid biosynthesis and plays important roles in steroid metabolism. Capable of reducing a broad range of delta-(4)-3-ketosteroids from C18 (such as, 17beta-hydroxyestr-4-en-3-one) to C27 (such as, 7alpha-hydroxycholest-4-en-3-one). In Mus musculus (Mouse), this protein is Aldo-keto reductase family 1 member D1 (Akr1d1).